A 572-amino-acid polypeptide reads, in one-letter code: Flagellin A (572 aa).

The protein belongs to the bacterial flagellin family. Heteromer of FlaA and FlaB. Interacts with FliW.

Its subcellular location is the secreted. The protein resides in the bacterial flagellum. Flagellin is the subunit protein which polymerizes to form the filaments of bacterial flagella. FlaA binds to flagellar assembly factor FliW protein, preventing FliW from binding to CsrA, so that CsrA can then bind flaA mRNA and represses its translation. The protein is Flagellin A (flaA) of Campylobacter jejuni subsp. jejuni serotype O:2 (strain ATCC 700819 / NCTC 11168).